A 252-amino-acid polypeptide reads, in one-letter code: 5'-nucleotidase SurE (252 aa).

Residues aspartate 8, aspartate 9, serine 40, and asparagine 93 each contribute to the a divalent metal cation site.

Belongs to the SurE nucleotidase family. The cofactor is a divalent metal cation.

Its subcellular location is the cytoplasm. It catalyses the reaction a ribonucleoside 5'-phosphate + H2O = a ribonucleoside + phosphate. Nucleotidase that shows phosphatase activity on nucleoside 5'-monophosphates. This chain is 5'-nucleotidase SurE, found in Erythrobacter litoralis (strain HTCC2594).